The following is a 188-amino-acid chain: Methylamine dehydrogenase light chain (188 aa).

Residues 1–57 constitute a signal peptide (tat-type signal); sequence MLGNFRFDDMVEKLSRRVAGQTSRRSVIGKLGTAMLGIGLVPLLPVDRRGRVSRANA. Intrachain disulfides connect cysteine 80–cysteine 145, cysteine 86–cysteine 118, cysteine 93–cysteine 178, cysteine 95–cysteine 143, cysteine 103–cysteine 134, and cysteine 135–cysteine 166. The residue at position 114 (tryptophan 114) is a Tryptophylquinone. Residues 114–165 constitute a cross-link (tryptophan tryptophylquinone (Trp-Trp)); the sequence is WVASCYNPTDGQSYLIAYRDCCGYNVSGRCPCLNTEGELPVYRPEFANDIIW.

This sequence belongs to the aromatic amine dehydrogenase light chain family. Heterotetramer of two light and two heavy chains. Tryptophan tryptophylquinone residue is required as a cofactor. In terms of processing, predicted to be exported by the Tat system. The position of the signal peptide cleavage has not been experimentally proven. Tryptophan tryptophylquinone (TTQ) is formed by oxidation of the indole ring of a tryptophan to form tryptophylquinone followed by covalent cross-linking with another tryptophan residue.

It is found in the periplasm. The catalysed reaction is 2 oxidized [amicyanin] + methylamine + H2O = 2 reduced [amicyanin] + formaldehyde + NH4(+) + 2 H(+). Its pathway is one-carbon metabolism; methylamine degradation; formaldehyde from methylamine: step 1/1. Functionally, methylamine dehydrogenase carries out the oxidation of methylamine. Electrons are passed from methylamine dehydrogenase to amicyanin. The chain is Methylamine dehydrogenase light chain (mauA) from Paracoccus denitrificans.